Here is a 564-residue protein sequence, read N- to C-terminus: Keratin, type II cytoskeletal 6B (564 aa).

The segment covering 1–11 has biased composition (low complexity); sequence MASTSTTIRSH. A disordered region spans residues 1–23; the sequence is MASTSTTIRSHSSSRRGFSANSA. Position 2 is an N-acetylalanine (alanine 2). The head stretch occupies residues 2–162; the sequence is ASTSTTIRSH…DPAIQRVRAE (161 aa). The interval 163 to 198 is coil 1A; that stretch reads EREQIKTLNNKFASFIDKVRFLEQQNKVLDTKWTLL. In terms of domain architecture, IF rod spans 163–476; the sequence is EREQIKTLNN…KLLEGEECRL (314 aa). A linker 1 region spans residues 199–217; it reads QEQGTKTVRQNLEPLFEQY. The tract at residues 218–309 is coil 1B; sequence INNLRRQLDN…ALYDAELSQM (92 aa). The tract at residues 310 to 333 is linker 12; sequence QTHISDTSVVLSMDNNRNLDLDSI. The coil 2 stretch occupies residues 334 to 472; that stretch reads IAEVKAQYEE…ATYRKLLEGE (139 aa). The tail stretch occupies residues 473 to 564; sequence ECRLNGEGVG…SSSSRKSYKH (92 aa). The interval 533 to 564 is disordered; it reads RATGGGLSSVGGGSSTIKYTTTSSSSRKSYKH. Over residues 534 to 546 the composition is skewed to gly residues; sequence ATGGGLSSVGGGS. Residues 547–564 show a composition bias toward low complexity; sequence STIKYTTTSSSSRKSYKH.

The protein belongs to the intermediate filament family. Heterodimer of a type I and a type II keratin. KRT6 isomers associate with KRT16 and/or KRT17. Constitutively expressed in distinct types of epithelia such as those in oral mucosa, esophagus, papillae of tongue and hair follicle outer root sheath.

This chain is Keratin, type II cytoskeletal 6B (KRT6B), found in Homo sapiens (Human).